We begin with the raw amino-acid sequence, 86 residues long: NQPGPPGPPGPPGSAGEPGPGGRPGFPGTPGMQGPQGERGLPGEXGERGLPGPPGPQGESRTGPPGSTGSRGPPGPPGRPGDSGIR.

A compositionally biased stretch (pro residues) spans 1-12 (NQPGPPGPPGPP). The tract at residues 1–86 (NQPGPPGPPG…PGRPGDSGIR (86 aa)) is disordered. Hydroxyproline is present on residues P6, P9, P12, P18, P24, P27, P30, P42, P51, P54, P65, P74, P77, and P80. The segment covering 16–25 (GEPGPGGRPG) has biased composition (gly residues). Over residues 35-50 (PQGERGLPGEXGERGL) the composition is skewed to low complexity. The segment covering 57–71 (QGESRTGPPGSTGSR) has biased composition (low complexity).

This sequence belongs to the fibril-associated collagens with interrupted helices (FACIT) family. In terms of assembly, trimer of identical chains each containing 190 kDa of non-triple-helical sequences. Post-translationally, the triple-helical tail is stabilized by disulfide bonds at each end. In terms of processing, prolines at the third position of the tripeptide repeating unit (G-X-Y) are hydroxylated in some or all of the chains.

The protein resides in the secreted. It is found in the extracellular space. It localises to the extracellular matrix. Its function is as follows. Type XII collagen interacts with type I collagen-containing fibrils, the COL1 domain could be associated with the surface of the fibrils, and the COL2 and NC3 domains may be localized in the perifibrillar matrix. The sequence is that of Collagen alpha-1(XII) chain (COL12A1) from Bos taurus (Bovine).